Here is a 323-residue protein sequence, read N- to C-terminus: Malate dehydrogenase (323 aa).

NAD(+) contacts are provided by residues 20–25 and Asp44; that span reads GAGRVG. Positions 93 and 99 each coordinate substrate. NAD(+) is bound by residues Asn106 and 129–131; that span reads VTN. Residues Asn131 and Arg162 each coordinate substrate. The Proton acceptor role is filled by His186.

Belongs to the LDH/MDH superfamily. MDH type 3 family.

It carries out the reaction (S)-malate + NAD(+) = oxaloacetate + NADH + H(+). Catalyzes the reversible oxidation of malate to oxaloacetate. This is Malate dehydrogenase from Nostoc sp. (strain PCC 7120 / SAG 25.82 / UTEX 2576).